The sequence spans 799 residues: Zinc finger X-linked protein ZXDA (799 aa).

The tract at residues 1-89 (MEIPKLLPAR…QPSGGGDDFF (89 aa)) is disordered. Positions 13–26 (LQGGGGGGIPAGGG) are enriched in gly residues. C2H2-type zinc fingers lie at residues 267–291 (YLCPEALCGQTFAKKHQLKMHLLTH), 300–324 (FKCPLGGCGWTFTTSYKLKRHLQSH), 330–354 (FGCPAEGCGKSFTTVYNLKAHMKGH), 360–382 (FKCEVCEESFPTQAKLGAHQRSH), 389–413 (YQCAFSGCKKTFITVSALFSHNRAH), 420–444 (FSCSFPGCSKQYDKACRLKIHLRSH), 450–474 (FLCDFDGCGWNFTSMSKLLRHKRKH), 480–504 (FMCPVEGCGKSFTRAEHLKGHSITH), 510–534 (FVCPVAGCCARFSARSSLYIHSKKH), and 543–568 (SRCPISSCNKLFTSKHSMKTHMVKRH). The tract at residues 267 to 573 (YLCPEALCGQ…MVKRHKVGQD (307 aa)) is required for interaction with ZXDC. The required for transcriptional activation stretch occupies residues 572–699 (QDLLAQLEAA…NMDEVSSVSV (128 aa)).

This sequence belongs to the ZXD family. As to quaternary structure, self-associates. Interacts with ZXDC and CIITA. In terms of tissue distribution, may be expressed in brain, heart, kidney, liver, lung, muscle and placenta.

The protein resides in the nucleus. Its function is as follows. Cooperates with CIITA to promote transcription of MHC class I and MHC class II genes. The protein is Zinc finger X-linked protein ZXDA (ZXDA) of Homo sapiens (Human).